A 138-amino-acid chain; its full sequence is Ribulose bisphosphate carboxylase small subunit (138 aa).

Belongs to the RuBisCO small chain family. Heterohexadecamer of 8 large and 8 small subunits.

Its subcellular location is the plastid. It is found in the chloroplast. Functionally, ruBisCO catalyzes two reactions: the carboxylation of D-ribulose 1,5-bisphosphate, the primary event in carbon dioxide fixation, as well as the oxidative fragmentation of the pentose substrate in the photorespiration process. Both reactions occur simultaneously and in competition at the same active site. Although the small subunit is not catalytic it is essential for maximal activity. The protein is Ribulose bisphosphate carboxylase small subunit of Porphyridium aerugineum (Red microalga).